Reading from the N-terminus, the 1407-residue chain is DNA-directed RNA polymerase subunit beta' (1407 aa).

Residues cysteine 70, cysteine 72, cysteine 85, and cysteine 88 each coordinate Zn(2+). 3 residues coordinate Mg(2+): aspartate 460, aspartate 462, and aspartate 464. Cysteine 814, cysteine 888, cysteine 895, and cysteine 898 together coordinate Zn(2+).

It belongs to the RNA polymerase beta' chain family. As to quaternary structure, the RNAP catalytic core consists of 2 alpha, 1 beta, 1 beta' and 1 omega subunit. When a sigma factor is associated with the core the holoenzyme is formed, which can initiate transcription. It depends on Mg(2+) as a cofactor. Zn(2+) serves as cofactor.

It catalyses the reaction RNA(n) + a ribonucleoside 5'-triphosphate = RNA(n+1) + diphosphate. In terms of biological role, DNA-dependent RNA polymerase catalyzes the transcription of DNA into RNA using the four ribonucleoside triphosphates as substrates. This is DNA-directed RNA polymerase subunit beta' from Citrobacter koseri (strain ATCC BAA-895 / CDC 4225-83 / SGSC4696).